Reading from the N-terminus, the 219-residue chain is Lipoprotein-releasing system ATP-binding protein LolD (219 aa).

Residues 5–219 enclose the ABC transporter domain; sequence LKAGDIFKTY…KVVMQDGVII (215 aa). 37-44 is an ATP binding site; it reads GASGAGKS.

It belongs to the ABC transporter superfamily. Lipoprotein translocase (TC 3.A.1.125) family. As to quaternary structure, the complex is composed of two ATP-binding proteins (LolD) and two transmembrane proteins (LolC and LolE).

Its subcellular location is the cell inner membrane. Part of the ABC transporter complex LolCDE involved in the translocation of mature outer membrane-directed lipoproteins, from the inner membrane to the periplasmic chaperone, LolA. Responsible for the formation of the LolA-lipoprotein complex in an ATP-dependent manner. In Cytophaga hutchinsonii (strain ATCC 33406 / DSM 1761 / CIP 103989 / NBRC 15051 / NCIMB 9469 / D465), this protein is Lipoprotein-releasing system ATP-binding protein LolD.